The primary structure comprises 237 residues: Ribonuclease PH (237 aa).

Phosphate-binding positions include arginine 86 and 124–126 (GTR).

It belongs to the RNase PH family. As to quaternary structure, homohexameric ring arranged as a trimer of dimers.

The catalysed reaction is tRNA(n+1) + phosphate = tRNA(n) + a ribonucleoside 5'-diphosphate. Phosphorolytic 3'-5' exoribonuclease that plays an important role in tRNA 3'-end maturation. Removes nucleotide residues following the 3'-CCA terminus of tRNAs; can also add nucleotides to the ends of RNA molecules by using nucleoside diphosphates as substrates, but this may not be physiologically important. Probably plays a role in initiation of 16S rRNA degradation (leading to ribosome degradation) during starvation. The protein is Ribonuclease PH of Rhodopseudomonas palustris (strain HaA2).